A 197-amino-acid chain; its full sequence is Molybdenum cofactor guanylyltransferase (197 aa).

GTP-binding positions include 12 to 14, Lys25, Asn53, Asp71, and Asp101; that span reads LAG. A Mg(2+)-binding site is contributed by Asp101.

The protein belongs to the MobA family. In terms of assembly, monomer. The cofactor is Mg(2+).

The protein resides in the cytoplasm. The enzyme catalyses Mo-molybdopterin + GTP + H(+) = Mo-molybdopterin guanine dinucleotide + diphosphate. Functionally, transfers a GMP moiety from GTP to Mo-molybdopterin (Mo-MPT) cofactor (Moco or molybdenum cofactor) to form Mo-molybdopterin guanine dinucleotide (Mo-MGD) cofactor. This Bordetella pertussis (strain Tohama I / ATCC BAA-589 / NCTC 13251) protein is Molybdenum cofactor guanylyltransferase.